We begin with the raw amino-acid sequence, 441 residues long: Glutamate--tRNA ligase 2 (441 aa).

The 'HIGH' region signature appears at 9-19 (PSPTGYIHVGN). A 'KMSKS' region motif is present at residues 239 to 243 (ALSKR). K242 serves as a coordination point for ATP.

This sequence belongs to the class-I aminoacyl-tRNA synthetase family. Glutamate--tRNA ligase type 1 subfamily. Monomer.

It is found in the cytoplasm. It carries out the reaction tRNA(Glu) + L-glutamate + ATP = L-glutamyl-tRNA(Glu) + AMP + diphosphate. Catalyzes the attachment of glutamate to tRNA(Glu) in a two-step reaction: glutamate is first activated by ATP to form Glu-AMP and then transferred to the acceptor end of tRNA(Glu). This chain is Glutamate--tRNA ligase 2, found in Cereibacter sphaeroides (strain ATCC 17029 / ATH 2.4.9) (Rhodobacter sphaeroides).